Consider the following 293-residue polypeptide: MKRKTKLDKKSKWVLDMKFGVSSLVFLPESLTSSMEKIAEHNFDAWEIVCEGTHYLSPKNIKYLMELRDRYEVEIVVHAPFSDLNPASMNERVRKLTVECIRDAIEGAFELDSEVVVVHPGYIPELWSNYVSEILDNNFSTLSEIVEIAEDYGIKIGLENMPNFRGVLGITPESLLEIVKDIDSKNLGITFDIGHANTAGNPAEFVEKLQNIGIGIIHVHAHDNNGYDDEHLKIGEGNINFIEVLEKLKEIGYDGVISIENKNIRDAVKSKEILKEYLEIVNEKVAEKEKIEE.

This sequence to M.jannaschii MJ1614 and MJ0008.

This is an uncharacterized protein from Methanocaldococcus jannaschii (strain ATCC 43067 / DSM 2661 / JAL-1 / JCM 10045 / NBRC 100440) (Methanococcus jannaschii).